The primary structure comprises 214 residues: Thymidylate kinase (214 aa).

14-21 (GLEGAGKT) is a binding site for ATP.

Belongs to the thymidylate kinase family.

It catalyses the reaction dTMP + ATP = dTDP + ADP. Phosphorylation of dTMP to form dTDP in both de novo and salvage pathways of dTTP synthesis. This is Thymidylate kinase from Mannheimia succiniciproducens (strain KCTC 0769BP / MBEL55E).